Reading from the N-terminus, the 60-residue chain is Anionic antimicrobial peptide 2 (60 aa).

As to expression, hemolymph.

The protein resides in the secreted. Antimicrobial protein. Has antibacterial activity against the Gram-positive bacteria M.luteus (MIC=86.6 uM), L.monocytogenes (MIC=86.6 uM), and S.lutea (MIC=86.6 uM). Lacks antibacterial activity against the Gram-positive bacteria B.circulans and S.aureus, and the Gram-negative bacteria E.coli D31, E.coli ATCC 25922, and S.typhimurium. Has antifungal activity against P.pastoris (MIC=86.6 uM) and P.stipitis (MIC=90.9 uM), but lacks antifungal activity against A.niger, C.albicans, C.albidus, C.fructus, C.wickerhamii, F.oxysporum, S.cerevisiae, S.pombe, T.harzianum, and Z.marxianus. The chain is Anionic antimicrobial peptide 2 from Galleria mellonella (Greater wax moth).